We begin with the raw amino-acid sequence, 253 residues long: FGFR1 oncogene partner 2 (253 aa).

Residues 5 to 104 (IEKALADAKA…SALELIMSKY (100 aa)) are a coiled coil. At serine 141 the chain carries Phosphoserine. Residues 160–223 (LERRHLEANQ…LREILQITRE (64 aa)) are a coiled coil. The tract at residues 231-253 (DDASESTSLSALVTNSDLSLRKS) is disordered. Residues 235 to 253 (ESTSLSALVTNSDLSLRKS) are compositionally biased toward polar residues.

The protein belongs to the SIKE family. In terms of tissue distribution, expressed in bone marrow, spleen and thymus.

It is found in the cytoplasm. In terms of biological role, may be involved in wound healing pathway. The polypeptide is FGFR1 oncogene partner 2 (FGFR1OP2) (Homo sapiens (Human)).